Reading from the N-terminus, the 145-residue chain is Ribosomal protein uL24-like (145 aa).

Disordered stretches follow at residues 1 to 21 and 122 to 145; these read MKFNPFVTSDRSKNRKRHFNA and KAKSRQVGKEKGKYKEELIEKMQE. Glycyl lysine isopeptide (Lys-Gly) (interchain with G-Cter in SUMO2) cross-links involve residues Lys136 and Lys142.

Belongs to the universal ribosomal protein uL24 family.

The chain is Ribosomal protein uL24-like (RPL26L1) from Homo sapiens (Human).